The primary structure comprises 680 residues: DNA ligase (680 aa).

Residues 35 to 39 (DAQYD), 84 to 85 (SL), and Glu-115 contribute to the NAD(+) site. Lys-117 functions as the N6-AMP-lysine intermediate in the catalytic mechanism. NAD(+)-binding residues include Arg-138, Glu-174, Lys-291, and Lys-315. Zn(2+) contacts are provided by Cys-419, Cys-422, Cys-437, and Cys-442. The region spanning 601–680 (NKNMPFSGME…REFINMLEQS (80 aa)) is the BRCT domain.

Belongs to the NAD-dependent DNA ligase family. LigA subfamily. The cofactor is Mg(2+). Mn(2+) is required as a cofactor.

It carries out the reaction NAD(+) + (deoxyribonucleotide)n-3'-hydroxyl + 5'-phospho-(deoxyribonucleotide)m = (deoxyribonucleotide)n+m + AMP + beta-nicotinamide D-nucleotide.. Its function is as follows. DNA ligase that catalyzes the formation of phosphodiester linkages between 5'-phosphoryl and 3'-hydroxyl groups in double-stranded DNA using NAD as a coenzyme and as the energy source for the reaction. It is essential for DNA replication and repair of damaged DNA. The chain is DNA ligase from Dehalococcoides mccartyi (strain ATCC BAA-2100 / JCM 16839 / KCTC 5957 / BAV1).